A 71-amino-acid chain; its full sequence is Long neurotoxin Tx-NM3-1 (71 aa).

Intrachain disulfides connect Cys3/Cys20, Cys14/Cys41, Cys26/Cys30, Cys45/Cys56, and Cys57/Cys62.

In terms of tissue distribution, expressed by the venom gland.

The protein localises to the secreted. Its function is as follows. Binds with high affinity to muscular (alpha-1-beta-1-gamma-delta/CHRNA1-CHRNB1-CHRNG-CHRND) and neuronal (alpha-7/CHRNA7) nicotinic acetylcholine receptor (nAChR) and inhibits acetylcholine from binding to the receptor, thereby impairing neuromuscular and neuronal transmission. Ranges of nAChR inhibition are in nanomolar (competitive binding with alpha-bungarotoxin gives Ki=1.66 nM on muscle nAChR and Ki=4.84 nM on alpha-7). Also shows moderate inhibition on GABA(A) alpha-1-beta-3-gamma-2 receptor (GABRA1-GABRB3-GABRG2) (IC(50)=0.68 uM), and a lower inhibition on alpha-1-beta-2-gamma-2 (GABRA1-GABRB2-GABRG2) and alpha-3-beta-2-gamma-2 (GABRA3-GABRB2-GABRG2). In Naja melanoleuca (Forest cobra), this protein is Long neurotoxin Tx-NM3-1.